We begin with the raw amino-acid sequence, 354 residues long: S-adenosylmethionine:tRNA ribosyltransferase-isomerase (354 aa).

Belongs to the QueA family. In terms of assembly, monomer.

The protein resides in the cytoplasm. It catalyses the reaction 7-aminomethyl-7-carbaguanosine(34) in tRNA + S-adenosyl-L-methionine = epoxyqueuosine(34) in tRNA + adenine + L-methionine + 2 H(+). The protein operates within tRNA modification; tRNA-queuosine biosynthesis. Transfers and isomerizes the ribose moiety from AdoMet to the 7-aminomethyl group of 7-deazaguanine (preQ1-tRNA) to give epoxyqueuosine (oQ-tRNA). In Salmonella typhi, this protein is S-adenosylmethionine:tRNA ribosyltransferase-isomerase.